A 179-amino-acid polypeptide reads, in one-letter code: Apoptosis regulator Bcl-2 homolog (179 aa).

The short motif at 76 to 95 (ELFKDLINWGRICGFIVFSA) is the BH1 element. The short motif at 126-141 (PWMISHGGQEEFLAFS) is the BH2 element.

It belongs to the Bcl-2 family. Interacts with host BECN1 (via BH3 homology domain); this interaction allows the virus to inhibit BECN1, and thus autophagy. Interacts with host BID. Interacts with host BAX.

The protein localises to the host mitochondrion. The protein resides in the host endoplasmic reticulum. Its function is as follows. Suppresses apoptosis in host cell to promote the viral replication. Has the ability to potentially bind to all the members of the proapoptotic Bcl-2 family. Inhibits autophagy by interacting with host Beclin 1 (BECN1). This African swine fever virus (isolate Pig/Kenya/KEN-50/1950) (ASFV) protein is Apoptosis regulator Bcl-2 homolog.